A 415-amino-acid chain; its full sequence is MSEVIEKAKKAKVAKEELVHQPTERKNEALSFIAEAIRFKQDEILAENEKDIVRGKEKGFSPALLDRLALTPERLNDIADAVMLLTKLEDPVGETLETIRKDNGLFIENVRVPLGVVGMIYEARPNVTVDAATLCLKTGNAVILRGSSSAINSNKALVRVIREALERSALPEDAVQLIEDTSKETAKQLFTLNDGLDVLIPRGGKNLIDMVVRESTVPVLETGAGNCHIFIDESAQPDMAEQVVINAKTQRPSVCNAIETVLIHKGWAEEHTKALLQKLEEAGVEIRGDEAVCTMLPSAVPARETDWGTEFLAPVVSIKTVAGIDEAIRHIRQYGTRHSEAILTENQENARYFLTSVDAAAVYHNASTRFTDGFEFGYGAEIGISTQKLHARGPMGLKALTSSKYIIKGNGQIRI.

The protein belongs to the gamma-glutamyl phosphate reductase family.

It localises to the cytoplasm. It carries out the reaction L-glutamate 5-semialdehyde + phosphate + NADP(+) = L-glutamyl 5-phosphate + NADPH + H(+). The protein operates within amino-acid biosynthesis; L-proline biosynthesis; L-glutamate 5-semialdehyde from L-glutamate: step 2/2. In terms of biological role, catalyzes the NADPH-dependent reduction of L-glutamate 5-phosphate into L-glutamate 5-semialdehyde and phosphate. The product spontaneously undergoes cyclization to form 1-pyrroline-5-carboxylate. This is Gamma-glutamyl phosphate reductase 1 from Bacillus licheniformis (strain ATCC 14580 / DSM 13 / JCM 2505 / CCUG 7422 / NBRC 12200 / NCIMB 9375 / NCTC 10341 / NRRL NRS-1264 / Gibson 46).